Reading from the N-terminus, the 475-residue chain is Protein arginine N-methyltransferase 2 (475 aa).

A disordered region spans residues 167-194; it reads EFLSDDDDEEMDVDDDEEDESRDGEETG. Residues 169 to 194 are compositionally biased toward acidic residues; it reads LSDDDDEEMDVDDDEEDESRDGEETG. The RMT2 domain maps to 247-475; the sequence is LAGSQMDYLK…EDFYLPVCTF (229 aa). S-adenosyl-L-methionine contacts are provided by residues Tyr254, Met285, 310–315, 331–333, 358–359, and Asp378; these read FGLGII, EAH, and WQ.

It belongs to the class I-like SAM-binding methyltransferase superfamily. RMT2 methyltransferase family. In terms of assembly, monomer.

It is found in the cytoplasm. Its subcellular location is the nucleus. S-adenosyl-L-methionine-dependent protein-arginine N-methyltransferase that methylates the delta-nitrogen atom of arginine residues to form N5-methylarginine (type IV) in target proteins. Monomethylates ribosomal protein L12. The polypeptide is Protein arginine N-methyltransferase 2 (Yarrowia lipolytica (strain CLIB 122 / E 150) (Yeast)).